Here is a 47-residue protein sequence, read N- to C-terminus: Large ribosomal subunit protein bL34 (47 aa).

Belongs to the bacterial ribosomal protein bL34 family.

This is Large ribosomal subunit protein bL34 from Rhodococcus erythropolis (strain PR4 / NBRC 100887).